The sequence spans 246 residues: Phycobilisome rod-core linker polypeptide CpcG2 (246 aa).

One can recognise a PBS-linker domain in the interval 11 to 189; it reads SSQNQRVAGY…YWRDKLENSR (179 aa). Positions 224–246 are disordered; sequence DTTRRDRPTVPASINPTASFPLR. Polar residues predominate over residues 235–246; it reads ASINPTASFPLR.

The protein belongs to the phycobilisome linker protein family. As to quaternary structure, the phycobilisome is a hemidiscoidal structure that is composed of two distinct substructures: a core complex and a number of rods radiating from the core.

It is found in the cellular thylakoid membrane. Its function is as follows. Rod-core linker protein required for attachment of phycocyanin to allophycocyanin in cores of phycobilisomes. Linker polypeptides determine the state of aggregation and the location of the disk-shaped phycobiliprotein units within the phycobilisome and modulate their spectroscopic properties in order to mediate a directed and optimal energy transfer. The sequence is that of Phycobilisome rod-core linker polypeptide CpcG2 (cpcG2) from Thermosynechococcus vestitus (strain NIES-2133 / IAM M-273 / BP-1).